We begin with the raw amino-acid sequence, 1218 residues long: NACHT, LRR and PYD domains-containing protein 1a allele 3 (1218 aa).

A compositionally biased stretch (polar residues) spans 1–29; sequence MGESQSKQESNTRVAQHGSQQDVDPTFQT. 2 disordered regions span residues 1–44 and 71–91; these read MGES…QVEQ and EMDHESRRHSHQSKKKLDRSE. Over residues 77–87 the composition is skewed to basic residues; that stretch reads RRHSHQSKKKL. The NACHT domain maps to 175 to 484; it reads QLVIIEGAAG…EFFAAMSYIL (310 aa). 181 to 188 is an ATP binding site; that stretch reads GAAGIGKS. LRR repeat units follow at residues 343-364, 673-693, and 730-750; these read KERNTIIDFNLIGSIPVLLTLC, NLEELDLSGNPLSYSAVRSLC, and RLAELDLRLNDLGDNGVRQLC. A compositionally biased stretch (polar residues) spans 799 to 815; sequence TMPTENTDGEESLTSSK. Positions 799–842 are disordered; it reads TMPTENTDGEESLTSSKQQQQQSGDKHMEPLGTDDDFWGPSGPV. The interval 835 to 968 is ZU5; sequence FWGPSGPVST…HFAVLENPSF (134 aa). An FIIND domain is found at 835 to 1118; the sequence is FWGPSGPVST…LRPALPRMAS (284 aa). The tract at residues 969–1118 is UPA; sequence SPMGVLLRMI…LRPALPRMAS (150 aa). Residues 1122 to 1211 form the CARD domain; the sequence is DAPALLHFVD…HLIMDLLEKS (90 aa).

Belongs to the NLRP family. In terms of assembly, interacts (via LRR repeats) with BCL2 and BCL2L1 (via the loop between motifs BH4 and BH3). Interacts with NOD2; this interaction is enhanced in the presence of muramyl dipeptide (MDP) and increases IL1B release. Interacts with EIF2AK2/PKR; this interaction requires EIF2AK2 activity, is accompanied by EIF2AK2 autophosphorylation and promotes inflammasome assembly in response to danger-associated signals. Interacts with MEFV; this interaction targets Nlrp1a to degradation by autophagy, hence preventing excessive IL1B- and IL18-mediated inflammation. Interacts with DPP9; leading to inhibit activation of the inflammasome. DPP9 acts via formation of a ternary complex, composed of a DPP9 homodimer, one full-length NLRP1 protein, and one cleaved C-terminus of Nlrp1a (NACHT, LRR and PYD domains-containing protein 1a, C-terminus). Interacts with DPP8; leading to inhibit activation of the inflammasome, probably via formation of a ternary complex with DPP8. As to quaternary structure, interacts with the C-terminal part of Nlrp1a (NACHT, LRR and PYD domains-containing protein 1a, C-terminus) in absence of pathogens and other damage-associated signals. Interacts with the N-terminal part of Nlrp1a (NACHT, LRR and PYD domains-containing protein 1a, N-terminus) in absence of pathogens and other damage-associated signals. Homomultimer; forms the Nlrp1a inflammasome polymeric complex, a filament composed of homopolymers of this form in response to pathogens and other damage-associated signals. The Nlrp1a inflammasome polymeric complex directly recruits pro-caspase-1 (proCASP1) independently of PYCARD/ASC. Interacts (via CARD domain) with CASP1 (via CARD domain); leading to CASP1 activation. Post-translationally, autocatalytically cleaved. Autocatalytic cleavage in FIIND region occurs constitutively, prior to activation signals, and is required for inflammasome activity (IL1B release), possibly by facilitating CASP1 binding. Both N- and C-terminal parts remain associated non-covalently. In terms of processing, ubiquitinated in response to pathogen-associated signals, leading to its degradation by the proteasome and subsequent release of the cleaved C-terminal part of the protein (NACHT, LRR and PYD domains-containing protein 1a, C-terminus), which polymerizes and forms the Nlrp1a inflammasome.

Its subcellular location is the cytoplasm. It localises to the cytosol. The protein resides in the nucleus. It is found in the inflammasome. With respect to regulation, activated by pathogens and other damage-associated signals: activation promotes ubiquitination and degradation of the N-terminal part, releasing the cleaved C-terminal part of the protein (NACHT, LRR and PYD domains-containing protein 1a, C-terminus), which polymerizes and forms the Nlrp1a inflammasome. Nlrp1a inflammasome is inhibited by DPP8 and DPP9, which sequester the C-terminal fragment of Nlrp1a (NACHT, LRR and PYD domains-containing protein 1a, C-terminus) in a ternary complex, thereby preventing Nlrp1a oligomerization and activation. Nlrp1a inflammasome is strongly activated by Val-boroPro (Talabostat, PT-100), an inhibitor of dipeptidyl peptidases DPP8 and DPP9. Val-boroPro relieves inhibition of DPP8 and/or DPP9 by promoting disruption of the ternary complex, releasing its C-terminal part from autoinhibition. Not activated by cleavage by B.anthracis lethal toxin (LT) endopeptidase. Functionally, acts as the sensor component of the Nlrp1a inflammasome, which mediates inflammasome activation in response to various pathogen-associated signals, leading to subsequent pyroptosis. Inflammasomes are supramolecular complexes that assemble in the cytosol in response to pathogens and other damage-associated signals and play critical roles in innate immunity and inflammation. Acts as a recognition receptor (PRR): recognizes specific pathogens and other damage-associated signals, such as Val-boroPro inhibitor, and mediates the formation of the inflammasome polymeric complex. In response to pathogen-associated signals, the N-terminal part of Nlrp1a is degraded by the proteasome, releasing the cleaved C-terminal part of the protein (NACHT, LRR and PYD domains-containing protein 1a, C-terminus), which polymerizes to initiate the formation of the inflammasome complex: the inflammasome directly recruits pro-caspase-1 (proCASP1) independently of PYCARD/ASC and promotes caspase-1 (CASP1) activation, which subsequently cleaves and activates inflammatory cytokines IL1B and IL18 and gasdermin-D (GSDMD), leading to pyroptosis. In the absence of GSDMD expression, the Nlrp1a inflammasome is able to recruit and activate CASP8, leading to activation of gasdermin-E (GSDME). Its function is as follows. Constitutes the precursor of the Nlrp1a inflammasome, which mediates autoproteolytic processing within the FIIND domain to generate the N-terminal and C-terminal parts, which are associated non-covalently in absence of pathogens and other damage-associated signals. Regulatory part that prevents formation of the Nlrp1a inflammasome: in absence of pathogens and other damage-associated signals, interacts with the C-terminal part of Nlrp1a (NACHT, LRR and PYD domains-containing protein 1a, C-terminus), preventing activation of the Nlrp1a inflammasome. In response to pathogen-associated signals, this part is ubiquitinated by the N-end rule pathway and degraded by the proteasome, releasing the cleaved C-terminal part of the protein, which polymerizes and forms the Nlrp1a inflammasome. In terms of biological role, constitutes the active part of the Nlrp1a inflammasome. In absence of pathogens and other damage-associated signals, interacts with the N-terminal part of Nlrp1a (NACHT, LRR and PYD domains-containing protein 1a, N-terminus), preventing activation of the Nlrp1a inflammasome. In response to pathogen-associated signals, the N-terminal part of Nlrp1a is degraded by the proteasome, releasing this form, which polymerizes to form the Nlrp1a inflammasome complex: the Nlrp1a inflammasome complex then directly recruits pro-caspase-1 (proCASP1) and promotes caspase-1 (CASP1) activation, leading to gasdermin-D (GSDMD) cleavage and subsequent pyroptosis. The protein is NACHT, LRR and PYD domains-containing protein 1a allele 3 of Rattus norvegicus (Rat).